The chain runs to 399 residues: Proteasome-activating nucleotidase (399 aa).

A coiled-coil region spans residues 19–60 (ITYLKRRIRQLELQVRMLEADKERLERELSRLRSEMSRLRQP). ATP is bound by residues 184-189 (GCGKTL) and His-323. Residues 397–399 (IYG) form a docks into pockets in the proteasome alpha-ring to cause gate opening region.

The protein belongs to the AAA ATPase family. In terms of assembly, homohexamer. The hexameric complex has a two-ring architecture resembling a top hat that caps the 20S proteasome core at one or both ends. Upon ATP-binding, the C-terminus of PAN interacts with the alpha-rings of the proteasome core by binding to the intersubunit pockets.

It is found in the cytoplasm. Functionally, ATPase which is responsible for recognizing, binding, unfolding and translocation of substrate proteins into the archaeal 20S proteasome core particle. Is essential for opening the gate of the 20S proteasome via an interaction with its C-terminus, thereby allowing substrate entry and access to the site of proteolysis. Thus, the C-termini of the proteasomal ATPase function like a 'key in a lock' to induce gate opening and therefore regulate proteolysis. Unfolding activity requires energy from ATP hydrolysis, whereas ATP binding alone promotes ATPase-20S proteasome association which triggers gate opening, and supports translocation of unfolded substrates. The protein is Proteasome-activating nucleotidase of Pyrococcus horikoshii (strain ATCC 700860 / DSM 12428 / JCM 9974 / NBRC 100139 / OT-3).